Reading from the N-terminus, the 320-residue chain is Aspartate carbamoyltransferase catalytic subunit (320 aa).

Residues R57 and T58 each coordinate carbamoyl phosphate. Residue K85 participates in L-aspartate binding. 3 residues coordinate carbamoyl phosphate: R107, H141, and Q144. The L-aspartate site is built by R174 and R228. 2 residues coordinate carbamoyl phosphate: G269 and P270.

Belongs to the aspartate/ornithine carbamoyltransferase superfamily. ATCase family. Heterododecamer (2C3:3R2) of six catalytic PyrB chains organized as two trimers (C3), and six regulatory PyrI chains organized as three dimers (R2).

The enzyme catalyses carbamoyl phosphate + L-aspartate = N-carbamoyl-L-aspartate + phosphate + H(+). Its pathway is pyrimidine metabolism; UMP biosynthesis via de novo pathway; (S)-dihydroorotate from bicarbonate: step 2/3. Functionally, catalyzes the condensation of carbamoyl phosphate and aspartate to form carbamoyl aspartate and inorganic phosphate, the committed step in the de novo pyrimidine nucleotide biosynthesis pathway. The sequence is that of Aspartate carbamoyltransferase catalytic subunit from Mycobacterium ulcerans (strain Agy99).